Here is a 125-residue protein sequence, read N- to C-terminus: Succinate dehydrogenase assembly factor 3, mitochondrial (125 aa).

Residues 1-42 (MRTTNHLYRTVHRQGKPLLPPLHLYRRILRAHRTFPPAQRAL) constitute a mitochondrion transit peptide.

It belongs to the complex I LYR family. SDHAF3 subfamily. As to quaternary structure, interacts with the iron-sulfur protein subunit within the SDH catalytic dimer.

The protein resides in the mitochondrion matrix. Functionally, plays an essential role in the assembly of succinate dehydrogenase (SDH), an enzyme complex (also referred to as respiratory complex II) that is a component of both the tricarboxylic acid (TCA) cycle and the mitochondrial electron transport chain, and which couples the oxidation of succinate to fumarate with the reduction of ubiquinone (coenzyme Q) to ubiquinol. Promotes maturation of the iron-sulfur protein subunit of the SDH catalytic dimer, protecting it from the deleterious effects of oxidants. May act together with SDHAF1. In Eremothecium gossypii (strain ATCC 10895 / CBS 109.51 / FGSC 9923 / NRRL Y-1056) (Yeast), this protein is Succinate dehydrogenase assembly factor 3, mitochondrial.